A 229-amino-acid polypeptide reads, in one-letter code: Potassium/proton antiporter CemA (229 aa).

Transmembrane regions (helical) follow at residues 6–26, 107–127, and 189–209; these read AFIP…ISLC, ILHF…SFWG, and ILSG…KYWI.

This sequence belongs to the CemA family.

The protein resides in the plastid. It localises to the chloroplast inner membrane. It catalyses the reaction K(+)(in) + H(+)(out) = K(+)(out) + H(+)(in). Contributes to K(+)/H(+) antiport activity by supporting proton efflux to control proton extrusion and homeostasis in chloroplasts in a light-dependent manner to modulate photosynthesis. Prevents excessive induction of non-photochemical quenching (NPQ) under continuous-light conditions. Indirectly promotes efficient inorganic carbon uptake into chloroplasts. The polypeptide is Potassium/proton antiporter CemA (Olimarabidopsis pumila (Dwarf rocket)).